We begin with the raw amino-acid sequence, 314 residues long: Inosine-uridine preferring nucleoside hydrolase (314 aa).

Ca(2+) is bound at residue aspartate 10. Aspartate 14 lines the substrate pocket. Ca(2+)-binding residues include aspartate 15 and threonine 126. Positions 160, 166, and 168 each coordinate substrate. The active-site Proton donor is the histidine 240. Ca(2+) is bound at residue aspartate 241.

The protein belongs to the IUNH family. As to quaternary structure, homotetramer. The cofactor is Ca(2+).

The enzyme catalyses inosine + H2O = hypoxanthine + D-ribose. It catalyses the reaction uridine + H2O = D-ribose + uracil. The protein operates within purine metabolism; purine nucleoside salvage. With respect to regulation, is potently inhibited by immucillin A and immucillin ACAP, which are transition state inhibitors. Functionally, catalyzes the hydrolysis of the N-glycosidic bond of all of the commonly occurring purine and pyrimidine nucleosides into ribose and the associated base, but has a preference for inosine and uridine as substrates. Likely functions in purine salvage from the host, a fundamental pathway since protozoan parasites such as L.major are incapable of de novo purine biosynthesis. The protein is Inosine-uridine preferring nucleoside hydrolase (NSNH) of Leishmania major.